A 226-amino-acid chain; its full sequence is V-type proton ATPase subunit E 2 (226 aa).

The protein belongs to the V-ATPase E subunit family. V-ATPase is a heteromultimeric enzyme made up of two complexes: the ATP-hydrolytic V1 complex and the proton translocation V0 complex. The V1 complex consists of three catalytic AB heterodimers that form a heterohexamer, three peripheral stalks each consisting of EG heterodimers, one central rotor including subunits D and F, and the regulatory subunits C and H. The proton translocation complex V0 consists of the proton transport subunit a, a ring of proteolipid subunits c9c'', rotary subunit d, subunits e and f, and the accessory subunits ATP6AP1/Ac45 and ATP6AP2/PRR. Testis specific.

Subunit of the V1 complex of vacuolar(H+)-ATPase (V-ATPase), a multisubunit enzyme composed of a peripheral complex (V1) that hydrolyzes ATP and a membrane integral complex (V0) that translocates protons. V-ATPase is responsible for acidifying and maintaining the pH of intracellular compartments and in some cell types, is targeted to the plasma membrane, where it is responsible for acidifying the extracellular environment. The chain is V-type proton ATPase subunit E 2 (ATP6V1E2) from Homo sapiens (Human).